A 306-amino-acid chain; its full sequence is D-glucosamine-6-phosphate 4-epimerase (306 aa).

An SIS domain is found at 19–153; that stretch reads DIPGVKTAEK…TGSNYRVQDL (135 aa). The active-site Proton acceptor is the glutamate 200. The active-site Proton donor is histidine 216. Arginine 296 serves as the catalytic Proton acceptor.

The protein belongs to the PGI/PMI family.

It carries out the reaction D-glucosamine 6-phosphate = D-galactosamine 6-phosphate. In terms of biological role, involved in the synthesis of UDP-N-acetylgalactosamine (UDP-GalNAc). Catalyzes the conversion of glucosamine-6-phosphate (GlcN-6-P) to galactosamine-6-phosphate (GalN-6-P). In Sulfolobus acidocaldarius (strain ATCC 33909 / DSM 639 / JCM 8929 / NBRC 15157 / NCIMB 11770), this protein is D-glucosamine-6-phosphate 4-epimerase.